The primary structure comprises 363 residues: MAGNSFGERFKITTFGESHGPALGAIVDGCPPGLEISEEDLQVELDRRKPGTSRYTTQRREPDQVKILSGVFEGKTTGTTIGLLIENTDQKSKDYSNIAGTFRPGHADYTYTQKYGFRDYRGGGRSSARETAMRVAGGAIARKFLEQRLGIRIYGGCTQIGDVKAESLDWSTVNNNPFFFPDESKVPALEDLINALRKDGSSIGARVEVFADGVPPGWGEPVFDRIDADLAKAMMSINAVKGVEIGDGFAVVNQRGEQHRDEMTPQGFLSNHSGGVLGGISSGQTMRVAMALKPTSSILIAGKSIGLNGEAAEVVTKGRHDPCVGVRATPIAEAMLAIVLLDHYLRHRGQNADVVPPFPPIPG.

NADP(+) is bound by residues Arg48 and Arg54. Residues 125 to 127 (RSS), 238 to 239 (NA), Gly278, 293 to 297 (KPTSS), and Arg319 each bind FMN.

The protein belongs to the chorismate synthase family. As to quaternary structure, homotetramer. FMNH2 is required as a cofactor.

It catalyses the reaction 5-O-(1-carboxyvinyl)-3-phosphoshikimate = chorismate + phosphate. It functions in the pathway metabolic intermediate biosynthesis; chorismate biosynthesis; chorismate from D-erythrose 4-phosphate and phosphoenolpyruvate: step 7/7. Catalyzes the anti-1,4-elimination of the C-3 phosphate and the C-6 proR hydrogen from 5-enolpyruvylshikimate-3-phosphate (EPSP) to yield chorismate, which is the branch point compound that serves as the starting substrate for the three terminal pathways of aromatic amino acid biosynthesis. This reaction introduces a second double bond into the aromatic ring system. The polypeptide is Chorismate synthase (Alcanivorax borkumensis (strain ATCC 700651 / DSM 11573 / NCIMB 13689 / SK2)).